Here is a 459-residue protein sequence, read N- to C-terminus: Lipase 4 (459 aa).

An N-terminal signal peptide occupies residues 1 to 14 (MLFLLFLLVAPIYA). Cys-110 and Cys-281 are oxidised to a cystine. The active-site Charge relay system is the Ser-194. Asn-229 and Asn-266 each carry an N-linked (GlcNAc...) asparagine glycan. Active-site charge relay system residues include Asp-343 and His-376. Cys-359 and Cys-404 are joined by a disulfide.

This sequence belongs to the AB hydrolase superfamily. Lipase family. Class Lip subfamily.

It localises to the secreted. The enzyme catalyses a triacylglycerol + H2O = a diacylglycerol + a fatty acid + H(+). Secreted lipase that is able to hydrolyze both the neutral triacylglycerols and the monopalmitate ester Tween 40, allowing the use of hydrolyzed products as carbon sources. Has broad lipolytic activity, which may be important for colonization and subsequent infection, therefore contributing to the persistence and virulence in human tissue. This chain is Lipase 4, found in Candida albicans (strain SC5314 / ATCC MYA-2876) (Yeast).